We begin with the raw amino-acid sequence, 180 residues long: Large ribosomal subunit protein mL41 (180 aa).

A mitochondrion-targeting transit peptide spans 1 to 21; that stretch reads MKLVLVSTRGVRSLNSTNFPA.

This sequence belongs to the mitochondrion-specific ribosomal protein mL41 family. Component of the mitochondrial ribosome large subunit (39S) which comprises a 16S rRNA and about 50 distinct proteins.

The protein resides in the mitochondrion. This chain is Large ribosomal subunit protein mL41 (mrpl-41), found in Caenorhabditis elegans.